The sequence spans 440 residues: Glucose-1-phosphate adenylyltransferase (440 aa).

Alpha-D-glucose 1-phosphate-binding positions include Tyr-125, Gly-190, 205-206 (EK), and Ser-223.

It belongs to the bacterial/plant glucose-1-phosphate adenylyltransferase family. In terms of assembly, homotetramer.

The enzyme catalyses alpha-D-glucose 1-phosphate + ATP + H(+) = ADP-alpha-D-glucose + diphosphate. It participates in glycan biosynthesis; glycogen biosynthesis. Its function is as follows. Involved in the biosynthesis of ADP-glucose, a building block required for the elongation reactions to produce glycogen. Catalyzes the reaction between ATP and alpha-D-glucose 1-phosphate (G1P) to produce pyrophosphate and ADP-Glc. This is Glucose-1-phosphate adenylyltransferase from Dechloromonas aromatica (strain RCB).